The sequence spans 386 residues: Circumsporozoite protein (386 aa).

The N-terminal stretch at 1-22 (MKNFILLAVSSILLVDLFPTHC) is a signal peptide. The tract at residues 51–304 (HVGQSASRGR…NEGANAPNEK (254 aa)) is disordered. The span at 72–100 (DAKKKKDGKKAEPKNPRENKLKQPGDRAD) shows a compositional bias: basic and acidic residues. The segment at 80–88 (KKAEPKNPR) is required for the binding to heparan sulfate proteoglycans (HSPGs) on the surface of host hepatocytes. The interval 91 to 95 (KLKQP) is region I; contains the proteolytic cleavage site. 20 tandem repeats follow at residues 96-104 (GDRADGQPA), 105-113 (GDRADGQPA), 114-122 (GDRADGQPA), 123-131 (GDRADGQPA), 132-140 (GDRADGQPA), 141-149 (GDRAAGQPA), 150-158 (GDRADGQPA), 159-167 (GDRADGQPA), 168-176 (GDRAAGQPA), 177-185 (GDRAAGQPA), 186-194 (GDRADGQPA), 195-203 (GDRADGQPA), 204-212 (GDRADGQPA), 213-221 (GDRAAGQPA), 222-230 (GDRAAGQPA), 231-239 (GDRAAGQPA), 240-248 (GDRAAGQPA), 249-257 (GDRAAGQPA), 258-266 (GDRAAGQPA), and 267-275 (GDRAAGQPA). Residues 96–275 (GDRADGQPAG…AGDRAAGQPA (180 aa)) form a 20 X 9 AA tandem repeats of G-D-R-A-[AD]-G-Q-P-A region. Over residues 275–292 (AGNGAGGQAAGGNAGGQG) the composition is skewed to gly residues. The segment covering 293 to 303 (QNNEGANAPNE) has biased composition (low complexity). In terms of domain architecture, TSP type-1 spans 312-364 (KVRATVGTEWTPCSVTCGVGVRVRRRVNAANKKPEDLTLNDLETDVCTMDKCA). 2 disulfide bridges follow: C324–C358 and C328–C363. T327 carries O-linked (Fuc) threonine glycosylation. C363 carries the GPI-anchor amidated cysteine lipid modification. The propeptide at 364–386 (AGIFNVVSNSLGLVILLVLALFN) is removed in mature form.

This sequence belongs to the plasmodium circumsporozoite protein family. During host cell invasion, proteolytically cleaved at the cell membrane in the region I by a papain-like cysteine protease of parasite origin. Cleavage is triggered by the sporozoite contact with highly sulfated heparan sulfate proteoglycans (HSPGs) present on the host hepatocyte cell surface. Cleavage exposes the TSP type-1 (TSR) domain and is required for productive invasion of host hepatocytes but not for adhesion to the host cell membrane. Cleavage is dispensable for sporozoite development in the oocyst, motility and for traversal of host and vector cells. In terms of processing, O-glycosylated; maybe by POFUT2.

It localises to the cell membrane. The protein localises to the cytoplasm. Its function is as follows. Essential sporozoite protein. In the mosquito vector, required for sporozoite development in the oocyst, migration through the vector hemolymph and entry into the vector salivary glands. In the vertebrate host, required for sporozoite migration through the host dermis and infection of host hepatocytes. Binds to highly sulfated heparan sulfate proteoglycans (HSPGs) on the surface of host hepatocytes. Functionally, in the vertebrate host, binds to highly sulfated heparan sulfate proteoglycans (HSPGs) on the surface of host hepatocytes and is required for sporozoite invasion of the host hepatocytes. The protein is Circumsporozoite protein of Plasmodium simium.